The chain runs to 70 residues: uncharacterized protein (70 aa).

The protein belongs to the opacity porin family.

This is an uncharacterized protein from Haemophilus influenzae (strain ATCC 51907 / DSM 11121 / KW20 / Rd).